Here is a 572-residue protein sequence, read N- to C-terminus: Bilirubin oxidase (572 aa).

The signal sequence occupies residues 1-19 (MFKHTLGAAALSLLFNSNA). The propeptide occupies 20–38 (VQASPVPETSPATGHLFKR). 2 consecutive Plastocyanin-like domains span residues 98 to 194 (VGYD…YMLT) and 404 to 526 (VAFA…VFVD). Residues histidine 132, histidine 134, histidine 172, histidine 174, histidine 436, histidine 439, histidine 441, histidine 494, cysteine 495, histidine 496, histidine 500, and methionine 505 each contribute to the Cu cation site. Residues asparagine 510 and asparagine 520 are each glycosylated (N-linked (GlcNAc...) asparagine).

This sequence belongs to the multicopper oxidase family. The cofactor is Cu cation.

The catalysed reaction is 2 (4Z,15Z)-bilirubin IXalpha + O2 = 2 biliverdin IXalpha + 2 H2O. Oxidation of bilirubin and other tetrapyrroles. The polypeptide is Bilirubin oxidase (Albifimbria verrucaria (Myrothecium leaf spot and pod blight fungus)).